A 276-amino-acid polypeptide reads, in one-letter code: 2-dehydro-3-deoxyphosphooctonate aldolase (276 aa).

The protein belongs to the KdsA family.

The protein resides in the cytoplasm. The enzyme catalyses D-arabinose 5-phosphate + phosphoenolpyruvate + H2O = 3-deoxy-alpha-D-manno-2-octulosonate-8-phosphate + phosphate. The protein operates within carbohydrate biosynthesis; 3-deoxy-D-manno-octulosonate biosynthesis; 3-deoxy-D-manno-octulosonate from D-ribulose 5-phosphate: step 2/3. Its pathway is bacterial outer membrane biogenesis; lipopolysaccharide biosynthesis. This is 2-dehydro-3-deoxyphosphooctonate aldolase from Helicobacter pylori (strain P12).